We begin with the raw amino-acid sequence, 123 residues long: Transmembrane protein 254 (123 aa).

The next 3 helical transmembrane spans lie at 15–35, 63–83, and 95–115; these read LFWFTVIAVSFSYYTWVVFWP, NGYWLAWLVHVGESLYALVLC, and LLWFLQTFLFGVASLSILFAY.

It localises to the membrane. The sequence is that of Transmembrane protein 254 (Tmem254) from Rattus norvegicus (Rat).